We begin with the raw amino-acid sequence, 130 residues long: Lysozyme C, kidney isozyme (130 aa).

The region spanning K1–V130 is the C-type lysozyme domain. 4 disulfide bridges follow: C6–C128, C30–C116, C65–C81, and C77–C95. Catalysis depends on residues E35 and D53.

It belongs to the glycosyl hydrolase 22 family. Monomer.

The protein localises to the secreted. It catalyses the reaction Hydrolysis of (1-&gt;4)-beta-linkages between N-acetylmuramic acid and N-acetyl-D-glucosamine residues in a peptidoglycan and between N-acetyl-D-glucosamine residues in chitodextrins.. Its function is as follows. Lysozymes have primarily a bacteriolytic function; those in tissues and body fluids are associated with the monocyte-macrophage system and enhance the activity of immunoagents. The protein is Lysozyme C, kidney isozyme of Ovis aries (Sheep).